A 121-amino-acid polypeptide reads, in one-letter code: Acidic phospholipase A2 PLA-1 (121 aa).

Intrachain disulfides connect cysteine 26–cysteine 115, cysteine 28–cysteine 44, cysteine 43–cysteine 95, cysteine 49–cysteine 121, cysteine 50–cysteine 88, cysteine 57–cysteine 81, and cysteine 75–cysteine 86. Ca(2+)-binding residues include tyrosine 27, glycine 29, and glycine 31. Histidine 47 is a catalytic residue. Aspartate 48 provides a ligand contact to Ca(2+). The active site involves aspartate 89.

It belongs to the phospholipase A2 family. Group II subfamily. D49 sub-subfamily. It depends on Ca(2+) as a cofactor. As to expression, expressed by the venom gland.

The protein localises to the secreted. The catalysed reaction is a 1,2-diacyl-sn-glycero-3-phosphocholine + H2O = a 1-acyl-sn-glycero-3-phosphocholine + a fatty acid + H(+). In terms of biological role, PLA2 catalyzes the calcium-dependent hydrolysis of the 2-acyl groups in 3-sn-phosphoglycerides. The protein is Acidic phospholipase A2 PLA-1 of Eristicophis macmahoni (Leaf-nosed viper).